Here is a 307-residue protein sequence, read N- to C-terminus: Glycerol-3-phosphate dehydrogenase [NAD(P)+] (307 aa).

Residues Phe-11, Arg-31, and Lys-95 each contribute to the NADPH site. Residues Lys-95, Gly-121, and Ser-123 each coordinate sn-glycerol 3-phosphate. Ala-125 contacts NADPH. Sn-glycerol 3-phosphate-binding residues include Lys-176, Asp-229, Ser-239, Arg-240, and Asn-241. Lys-176 serves as the catalytic Proton acceptor. Arg-240 is a binding site for NADPH. Residue Glu-261 coordinates NADPH.

The protein belongs to the NAD-dependent glycerol-3-phosphate dehydrogenase family.

The protein resides in the cytoplasm. The catalysed reaction is sn-glycerol 3-phosphate + NAD(+) = dihydroxyacetone phosphate + NADH + H(+). It carries out the reaction sn-glycerol 3-phosphate + NADP(+) = dihydroxyacetone phosphate + NADPH + H(+). The protein operates within membrane lipid metabolism; glycerophospholipid metabolism. Its function is as follows. Catalyzes the reduction of the glycolytic intermediate dihydroxyacetone phosphate (DHAP) to sn-glycerol 3-phosphate (G3P), the key precursor for phospholipid synthesis. The polypeptide is Glycerol-3-phosphate dehydrogenase [NAD(P)+] (Jannaschia sp. (strain CCS1)).